A 3748-amino-acid polypeptide reads, in one-letter code: Intermembrane lipid transfer protein VPS13C (3748 aa).

The 113-residue stretch at 3–115 folds into the Chorein N-terminal domain; it reads LESVVADLLN…SLQDIKQKEL (113 aa). Serine 132 carries the post-translational modification Phosphoserine. Residue threonine 613 is modified to Phosphothreonine. Position 618 is a phosphoserine (serine 618). At threonine 623 the chain carries Phosphothreonine. 4 positions are modified to phosphoserine: serine 736, serine 841, serine 871, and serine 873. The FFAT signature appears at 876–882; that stretch reads EFFDAED. At threonine 1968 the chain carries Phosphothreonine. Residues serine 1974 and serine 2442 each carry the phosphoserine modification. The segment at 2410–3304 is required for late endosome/lysosome localization; it reads DYSLKDRAPF…IQQDIDALNT (895 aa). The SHR-BD domain occupies 2760-3012; the sequence is ELSVFSPYWL…LFAWADPTGI (253 aa). The tract at residues 3305–3748 is required for lipid droplet localization; that stretch reads ELMESSMTDM…VKLLRPQGPS (444 aa). 2 positions are modified to omega-N-methylarginine: arginine 3514 and arginine 3521. An N6-acetyllysine modification is found at lysine 3533.

This sequence belongs to the VPS13 family.

It localises to the mitochondrion outer membrane. Its subcellular location is the lipid droplet. The protein localises to the endoplasmic reticulum membrane. The protein resides in the lysosome membrane. It is found in the late endosome membrane. In terms of biological role, mediates the transfer of lipids between membranes at organelle contact sites. Necessary for proper mitochondrial function and maintenance of mitochondrial transmembrane potential. Involved in the regulation of PINK1/PRKN-mediated mitophagy in response to mitochondrial depolarization. The polypeptide is Intermembrane lipid transfer protein VPS13C (Mus musculus (Mouse)).